A 192-amino-acid polypeptide reads, in one-letter code: Inosine triphosphate pyrophosphatase (192 aa).

8 to 13 (TTNLKK) lines the ITP pocket. Glutamate 34 contacts Mg(2+). Residues lysine 46, 64–65 (DT), lysine 81, 141–144 (EGFD), lysine 164, and 169–170 (HR) each bind ITP.

The protein belongs to the HAM1 NTPase family. As to quaternary structure, homodimer. Requires Mg(2+) as cofactor. The cofactor is Mn(2+).

It is found in the cytoplasm. Its subcellular location is the nucleus. It carries out the reaction ITP + H2O = IMP + diphosphate + H(+). It catalyses the reaction dITP + H2O = dIMP + diphosphate + H(+). The enzyme catalyses XTP + H2O = XMP + diphosphate + H(+). Pyrophosphatase that hydrolyzes non-canonical purine nucleotides such as inosine triphosphate (ITP), deoxyinosine triphosphate (dITP) or xanthosine 5'-triphosphate (XTP) to their respective monophosphate derivatives. The enzyme does not distinguish between the deoxy- and ribose forms. Probably excludes non-canonical purines from RNA and DNA precursor pools, thus preventing their incorporation into RNA and DNA and avoiding chromosomal lesions. The sequence is that of Inosine triphosphate pyrophosphatase from Encephalitozoon cuniculi (strain GB-M1) (Microsporidian parasite).